A 581-amino-acid chain; its full sequence is Potassium-transporting ATPase potassium-binding subunit (581 aa).

The next 12 membrane-spanning stretches (helical) occupy residues 2 to 22, 74 to 94, 135 to 155, 177 to 197, 255 to 275, 284 to 304, 332 to 352, 357 to 377, 381 to 401, 421 to 441, 501 to 521, and 550 to 570; these read LQGW…TPFF, AVIA…PLNP, GLGY…IAFI, ILLP…VPET, LVQL…YGVF, LIYL…AIGE, WAQS…AVIA, LMPN…VFGG, GTAY…LMVG, FLIL…ALAF, LSAC…LLLL, and AGVI…LGPI.

It belongs to the KdpA family. The system is composed of three essential subunits: KdpA, KdpB and KdpC.

It localises to the cell inner membrane. Functionally, part of the high-affinity ATP-driven potassium transport (or Kdp) system, which catalyzes the hydrolysis of ATP coupled with the electrogenic transport of potassium into the cytoplasm. This subunit binds the periplasmic potassium ions and delivers the ions to the membrane domain of KdpB through an intramembrane tunnel. The sequence is that of Potassium-transporting ATPase potassium-binding subunit from Microcystis aeruginosa (strain NIES-843 / IAM M-2473).